A 78-amino-acid chain; its full sequence is Sec-independent protein translocase protein TatA (78 aa).

A helical transmembrane segment spans residues 4-21; it reads SFQHILILLVVVLLLFGR. Residues 49-78 form a disordered region; the sequence is TAKSDSIKTIDNTGKPTNVQANPQRQDSTV. The span at 57-78 shows a compositional bias: polar residues; the sequence is TIDNTGKPTNVQANPQRQDSTV.

This sequence belongs to the TatA/E family. As to quaternary structure, the Tat system comprises two distinct complexes: a TatABC complex, containing multiple copies of TatA, TatB and TatC subunits, and a separate TatA complex, containing only TatA subunits. Substrates initially bind to the TatABC complex, which probably triggers association of the separate TatA complex to form the active translocon.

It is found in the cell inner membrane. Part of the twin-arginine translocation (Tat) system that transports large folded proteins containing a characteristic twin-arginine motif in their signal peptide across membranes. TatA could form the protein-conducting channel of the Tat system. In Afipia carboxidovorans (strain ATCC 49405 / DSM 1227 / KCTC 32145 / OM5) (Oligotropha carboxidovorans), this protein is Sec-independent protein translocase protein TatA.